Reading from the N-terminus, the 461-residue chain is tRNA modification GTPase MnmE (461 aa).

Residues Arg21, Glu87, and Lys126 each coordinate (6S)-5-formyl-5,6,7,8-tetrahydrofolate. The 163-residue stretch at 222-384 (QSTVVLYGEP…LLELLKSKLT (163 aa)) folds into the TrmE-type G domain. K(+) is bound at residue Asn232. GTP contacts are provided by residues 232-237 (NTGKSS), 251-257 (SDVPGTT), and 276-279 (DTAG). Ser236 is a binding site for Mg(2+). 3 residues coordinate K(+): Ser251, Val253, and Thr256. Thr257 serves as a coordination point for Mg(2+). (6S)-5-formyl-5,6,7,8-tetrahydrofolate is bound at residue Lys461.

Belongs to the TRAFAC class TrmE-Era-EngA-EngB-Septin-like GTPase superfamily. TrmE GTPase family. In terms of assembly, homodimer. Heterotetramer of two MnmE and two MnmG subunits. The cofactor is K(+).

It is found in the cytoplasm. In terms of biological role, exhibits a very high intrinsic GTPase hydrolysis rate. Involved in the addition of a carboxymethylaminomethyl (cmnm) group at the wobble position (U34) of certain tRNAs, forming tRNA-cmnm(5)s(2)U34. This chain is tRNA modification GTPase MnmE, found in Leptospira biflexa serovar Patoc (strain Patoc 1 / Ames).